The sequence spans 534 residues: MTDQTTRLPVRRALISVSDKTGVVDFARELEALGVEILSTGGTFKLLRENGIAAIEVADYTGFPEMMDGRVKTLHPKIHGGILGRRDLDGAVMAEHGIAPIDLVAVNLYPFAATVAKPGCTLPDAIENIDIGGPTMVRSAAKNHKDVAIVVNAEDYAAVVDNLKNGGLTYAQRFDLALKAFEHTAGYDGMIANYLGGIDQSTEQLSTDNRSLFPRTYNMQFIKAQDMRYGENPHQQAAFYVEKPDEACVATARQLQGKELSFNNVADTDAALECVKSFTKPACVIVKHANPCGVAVVPENEGGIRKAYDLAYATDSESAFGGIIAFNRELDGETAQAIVERQFVEVIIAPKVSQAARDVVASKANVRLLECGEWPAERSPGWDYKRVNGGLLIQSRDIGMITEADLKIVTQRAPTEQEIHDLIFAWKVAKFVKSNAIVYAKNRQTVGVGAGQMSRVNSARIAAIKAEHAGLQVQGAVMASDAFFPFRDGIDNAAKAGITAVIQPGGSMRDNEVIAAADEAGIAMVFTGMRHFRH.

One can recognise an MGS-like domain in the interval 6-151; that stretch reads TRLPVRRALI…KNHKDVAIVV (146 aa).

Belongs to the PurH family.

The catalysed reaction is (6R)-10-formyltetrahydrofolate + 5-amino-1-(5-phospho-beta-D-ribosyl)imidazole-4-carboxamide = 5-formamido-1-(5-phospho-D-ribosyl)imidazole-4-carboxamide + (6S)-5,6,7,8-tetrahydrofolate. It catalyses the reaction IMP + H2O = 5-formamido-1-(5-phospho-D-ribosyl)imidazole-4-carboxamide. It functions in the pathway purine metabolism; IMP biosynthesis via de novo pathway; 5-formamido-1-(5-phospho-D-ribosyl)imidazole-4-carboxamide from 5-amino-1-(5-phospho-D-ribosyl)imidazole-4-carboxamide (10-formyl THF route): step 1/1. The protein operates within purine metabolism; IMP biosynthesis via de novo pathway; IMP from 5-formamido-1-(5-phospho-D-ribosyl)imidazole-4-carboxamide: step 1/1. This is Bifunctional purine biosynthesis protein PurH from Stutzerimonas stutzeri (strain A1501) (Pseudomonas stutzeri).